A 176-amino-acid polypeptide reads, in one-letter code: Ribosome maturation factor RimP (176 aa).

The protein belongs to the RimP family.

The protein resides in the cytoplasm. Functionally, required for maturation of 30S ribosomal subunits. The polypeptide is Ribosome maturation factor RimP (Chlorobium limicola (strain DSM 245 / NBRC 103803 / 6330)).